The sequence spans 337 residues: Glyceraldehyde-3-phosphate dehydrogenase (337 aa).

Residues 12 to 13 (RI), Asp-34, and Lys-79 contribute to the NAD(+) site. D-glyceraldehyde 3-phosphate is bound by residues 150-152 (SCT), Thr-181, 210-211 (TG), and Arg-233. Catalysis depends on Cys-151, which acts as the Nucleophile. An NAD(+)-binding site is contributed by Asn-315.

It belongs to the glyceraldehyde-3-phosphate dehydrogenase family. In terms of assembly, homotetramer.

Its subcellular location is the cytoplasm. The enzyme catalyses D-glyceraldehyde 3-phosphate + phosphate + NAD(+) = (2R)-3-phospho-glyceroyl phosphate + NADH + H(+). Its pathway is carbohydrate degradation; glycolysis; pyruvate from D-glyceraldehyde 3-phosphate: step 1/5. In Phanerodontia chrysosporium (White-rot fungus), this protein is Glyceraldehyde-3-phosphate dehydrogenase (GPD).